Here is a 222-residue protein sequence, read N- to C-terminus: 7-cyano-7-deazaguanine synthase (222 aa).

11–21 (LSGGMDSAVLL) provides a ligand contact to ATP. Zn(2+)-binding residues include C192, C200, C203, and C206.

Belongs to the QueC family. Zn(2+) is required as a cofactor.

The enzyme catalyses 7-carboxy-7-deazaguanine + NH4(+) + ATP = 7-cyano-7-deazaguanine + ADP + phosphate + H2O + H(+). It participates in purine metabolism; 7-cyano-7-deazaguanine biosynthesis. Catalyzes the ATP-dependent conversion of 7-carboxy-7-deazaguanine (CDG) to 7-cyano-7-deazaguanine (preQ(0)). In Sulfurihydrogenibium sp. (strain YO3AOP1), this protein is 7-cyano-7-deazaguanine synthase.